Reading from the N-terminus, the 418-residue chain is Intracellular coagulation inhibitor 1 (418 aa).

Positions 1-24 are cleaved as a signal peptide; that stretch reads MKLGDWKFCLLLFQLMFLTNVCLS. N-linked (GlcNAc...) asparagine glycans are attached at residues Asn-49 and Asn-404.

It belongs to the serpin family. As to quaternary structure, monomer. Forms a covalent heterodimer with clotting factor C. Interacts with big defensin. In terms of processing, N-glycosylated. In terms of tissue distribution, expressed in hemocytes (at protein level).

It is found in the secreted. Its function is as follows. Serine protease inhibitor that specifically inhibits clotting factor C. Does not inhibit clotting factor B or proclotting enzyme. The protein is Intracellular coagulation inhibitor 1 of Tachypleus tridentatus (Japanese horseshoe crab).